The sequence spans 396 residues: uncharacterized protein (396 aa).

Helical transmembrane passes span 12–32, 48–68, 78–98, 106–126, 138–158, 165–185, 209–229, 242–262, 271–291, 297–317, 338–358, and 362–382; these read LLAL…SVGL, GLTV…LTSL, LLWI…ASSI, VISA…AADI, IMFT…TFIG, FAFM…GILV, LLLL…VFTY, AGTV…GNMI, PIAA…VLTF, AAGL…VPGL, AMNI…GGVI, and IGLI…VILT.

It belongs to the major facilitator superfamily.

The protein resides in the cell membrane. This is an uncharacterized protein from Bacillus subtilis (strain 168).